We begin with the raw amino-acid sequence, 328 residues long: Putative gluconeogenesis factor (328 aa).

This sequence belongs to the gluconeogenesis factor family.

It is found in the cytoplasm. Required for morphogenesis under gluconeogenic growth conditions. The chain is Putative gluconeogenesis factor from Aquifex aeolicus (strain VF5).